The following is a 139-amino-acid chain: Putative pre-16S rRNA nuclease (139 aa).

Belongs to the YqgF nuclease family.

It is found in the cytoplasm. Its function is as follows. Could be a nuclease involved in processing of the 5'-end of pre-16S rRNA. The polypeptide is Putative pre-16S rRNA nuclease (Legionella pneumophila (strain Paris)).